Here is a 228-residue protein sequence, read N- to C-terminus: UPF0173 metal-dependent hydrolase Tpen_1493 (228 aa).

Belongs to the UPF0173 family.

The protein is UPF0173 metal-dependent hydrolase Tpen_1493 of Thermofilum pendens (strain DSM 2475 / Hrk 5).